A 91-amino-acid chain; its full sequence is Large ribosomal subunit protein bL31B (91 aa).

It belongs to the bacterial ribosomal protein bL31 family. Type B subfamily. Part of the 50S ribosomal subunit.

The chain is Large ribosomal subunit protein bL31B from Neisseria gonorrhoeae (strain NCCP11945).